The following is a 735-amino-acid chain: 5-methyltetrahydropteroyltriglutamate--homocysteine methyltransferase (735 aa).

Residues 15–18 and lysine 104 each bind 5-methyltetrahydropteroyltri-L-glutamate; that span reads REFK. L-homocysteine-binding positions include 409–411 and glutamate 462; that span reads IGS. Residues 409 to 411 and glutamate 462 each bind L-methionine; that span reads IGS. 5-methyltetrahydropteroyltri-L-glutamate is bound by residues 493 to 494 and tryptophan 539; that span reads RC. Aspartate 577 is an L-homocysteine binding site. Residue aspartate 577 coordinates L-methionine. Glutamate 583 contributes to the 5-methyltetrahydropteroyltri-L-glutamate binding site. Zn(2+)-binding residues include histidine 618, cysteine 620, and glutamate 642. The active-site Proton donor is the histidine 672. Cysteine 704 contributes to the Zn(2+) binding site.

This sequence belongs to the vitamin-B12 independent methionine synthase family. The cofactor is Zn(2+).

It carries out the reaction 5-methyltetrahydropteroyltri-L-glutamate + L-homocysteine = tetrahydropteroyltri-L-glutamate + L-methionine. Its pathway is amino-acid biosynthesis; L-methionine biosynthesis via de novo pathway; L-methionine from L-homocysteine (MetE route): step 1/1. Functionally, catalyzes the transfer of a methyl group from 5-methyltetrahydrofolate to homocysteine resulting in methionine formation. The protein is 5-methyltetrahydropteroyltriglutamate--homocysteine methyltransferase of Thermotoga petrophila (strain ATCC BAA-488 / DSM 13995 / JCM 10881 / RKU-1).